The chain runs to 64 residues: Disintegrin (64 aa).

The 64-residue stretch at 1-64 (NSVHPCCDPV…SDCPRNRYNH (64 aa)) folds into the Disintegrin domain. Intrachain disulfides connect C6–C29, C20–C26, C25–C50, and C38–C57. A Cell attachment site; atypical (MLD) motif is present at residues 42–44 (MLD).

Belongs to the disintegrin family. Dimeric disintegrin subfamily. As to quaternary structure, heterodimer; disulfide-linked. As to expression, expressed by the venom gland.

The protein localises to the secreted. Its function is as follows. Inhibits adhesion of cells expressing alpha-4/beta-1 (ITGA4/ITGB1) and alpha-4/beta-7 (ITGA4/ITGB7) integrins to the natural ligands vascular cell adhesion molecule 1 (VCAM-1) and mucosal addressin cell adhesion molecule 1 (MADCAM-1). The sequence is that of Disintegrin from Echis carinatus (Saw-scaled viper).